A 183-amino-acid chain; its full sequence is ER membrane protein complex subunit 4 (183 aa).

Threonine 2 is modified (N-acetylthreonine). The Cytoplasmic portion of the chain corresponds to 2–66; the sequence is TAQGGLVANR…VQETDRILVE (65 aa). Positions 20-39 are disordered; the sequence is ELSGPGGGSRGRSDRGSGQG. At serine 36 the chain carries Phosphoserine. Residues 67–87 traverse the membrane as a helical segment; that stretch reads KRCWDIALGPLKQIPMNLFIM. Over 88–98 the chain is Lumenal; the sequence is YMAGNTISIFP. The helical transmembrane segment at 99-120 threads the bilayer; the sequence is TMMVCMMAWRPIQALMAISATF. The Cytoplasmic segment spans residues 121–127; the sequence is KMLESSS. The chain crosses the membrane as a helical span at residues 128–148; that stretch reads QKFLQGLVYLIGNLMGLALAV. At 149-183 the chain is on the lumenal side; the sequence is YKCQSMGLLPTHASDWLAFIEPPERMEFSGGGLLL.

Belongs to the EMC4 family. In terms of assembly, component of the ER membrane protein complex (EMC). Isoform 1 is expressed in brain and heart. Isoform 2 is expressed in heart.

The protein localises to the endoplasmic reticulum membrane. In terms of biological role, part of the endoplasmic reticulum membrane protein complex (EMC) that enables the energy-independent insertion into endoplasmic reticulum membranes of newly synthesized membrane proteins. Preferentially accommodates proteins with transmembrane domains that are weakly hydrophobic or contain destabilizing features such as charged and aromatic residues. Involved in the cotranslational insertion of multi-pass membrane proteins in which stop-transfer membrane-anchor sequences become ER membrane spanning helices. It is also required for the post-translational insertion of tail-anchored/TA proteins in endoplasmic reticulum membranes. By mediating the proper cotranslational insertion of N-terminal transmembrane domains in an N-exo topology, with translocated N-terminus in the lumen of the ER, controls the topology of multi-pass membrane proteins like the G protein-coupled receptors. By regulating the insertion of various proteins in membranes, it is indirectly involved in many cellular processes. The chain is ER membrane protein complex subunit 4 (EMC4) from Homo sapiens (Human).